Here is a 493-residue protein sequence, read N- to C-terminus: UDP-N-acetylmuramoylalanine--D-glutamate ligase (493 aa).

126–132 (GTNGKTT) provides a ligand contact to ATP.

Belongs to the MurCDEF family.

It localises to the cytoplasm. It carries out the reaction UDP-N-acetyl-alpha-D-muramoyl-L-alanine + D-glutamate + ATP = UDP-N-acetyl-alpha-D-muramoyl-L-alanyl-D-glutamate + ADP + phosphate + H(+). It participates in cell wall biogenesis; peptidoglycan biosynthesis. Cell wall formation. Catalyzes the addition of glutamate to the nucleotide precursor UDP-N-acetylmuramoyl-L-alanine (UMA). This chain is UDP-N-acetylmuramoylalanine--D-glutamate ligase, found in Mycolicibacterium smegmatis (strain ATCC 700084 / mc(2)155) (Mycobacterium smegmatis).